We begin with the raw amino-acid sequence, 188 residues long: ATP-dependent protease subunit HslV (188 aa).

Thr14 is an active-site residue. The Na(+) site is built by Ala173, Cys176, and Thr179.

Belongs to the peptidase T1B family. HslV subfamily. In terms of assembly, a double ring-shaped homohexamer of HslV is capped on each side by a ring-shaped HslU homohexamer. The assembly of the HslU/HslV complex is dependent on binding of ATP.

The protein localises to the cytoplasm. It catalyses the reaction ATP-dependent cleavage of peptide bonds with broad specificity.. With respect to regulation, allosterically activated by HslU binding. Its function is as follows. Protease subunit of a proteasome-like degradation complex believed to be a general protein degrading machinery. This chain is ATP-dependent protease subunit HslV, found in Caulobacter vibrioides (strain ATCC 19089 / CIP 103742 / CB 15) (Caulobacter crescentus).